The chain runs to 278 residues: Serine protease 57 (278 aa).

An N-terminal signal peptide occupies residues 1 to 31; sequence MVPGTGGGRDCLTLVVATALTQLLWLPGCCG. The region spanning 34–263 is the Peptidase S1 domain; the sequence is IVGGHEVKPH…FVSWIWDVVR (230 aa). C59 and C75 are oxidised to a cystine. Active-site charge relay system residues include H74 and D122. N-linked (GlcNAc...) asparagine glycosylation is present at N129. Intrachain disulfides connect C157-C224, C188-C202, and C214-C239. The Charge relay system role is filled by S218.

The protein belongs to the peptidase S1 family. Post-translationally, after cleavage of the signal peptide, the N-terminus is probably further processed by CTSC. Processing by CTSC is probably required for accumulation in cytoplasmic granules; in the absence of CTSC the protein does not accumulate. N-glycosylated.

The protein resides in the cytoplasmic granule lumen. The protein localises to the secreted. Functionally, serine protease that cleaves preferentially after Arg residues. Can also cleave after citrulline (deimidated arginine) and methylarginine residues. This Rattus norvegicus (Rat) protein is Serine protease 57 (Prss57).